We begin with the raw amino-acid sequence, 372 residues long: Probable peptidoglycan glycosyltransferase FtsW (372 aa).

Over 1 to 12 (MQKKSTISWSYD) the chain is Cytoplasmic. Residues 13-33 (AWIVICTLSLLALGLLMVASA) form a helical membrane-spanning segment. Residues 34–45 (SMVISDRQFGYP) lie on the Periplasmic side of the membrane. The chain crosses the membrane as a helical span at residues 46–66 (FHYFIRHLIYLSLGLTLAWVA). The Cytoplasmic segment spans residues 67–77 (SRVPIKVWKTY). The helical transmembrane segment at 78–98 (SGYLFLVGFLLLILVLAPVIG) threads the bilayer. The Periplasmic portion of the chain corresponds to 99-109 (KTVNGSRRWIQ). A helical transmembrane segment spans residues 110 to 130 (LGFISLQVSEVVKFVTILYLA). Residues 131-142 (SFLQRYQSEVQK) lie on the Cytoplasmic side of the membrane. The helical transmembrane segment at 143-163 (ELKGFLKPMLLVGILSGLLLL) threads the bilayer. Residues 164–165 (EP) lie on the Periplasmic side of the membrane. A helical membrane pass occupies residues 166 to 186 (DFGAAVVITMTCLALLFLAGV). Arg-187 is a topological domain (cytoplasmic). A helical transmembrane segment spans residues 188 to 208 (LWPFCVLLVLVAGSLILLAIL). The Periplasmic portion of the chain corresponds to 209–277 (SPYRLQRLTS…LFAVLAEELG (69 aa)). Residues 278–298 (LIGEILLMGLFVLLIGRIILI) form a helical membrane-spanning segment. Residues 299–315 (GRRAENSNQLYSAYLAY) lie on the Cytoplasmic side of the membrane. Residues 316 to 336 (GIALWLGLQVIINIGVTAGVL) traverse the membrane as a helical segment. Over 337–342 (PTKGLT) the chain is Periplasmic. A helical transmembrane segment spans residues 343-363 (LPFISYGGSSLLMNCLAIGVI). The Cytoplasmic portion of the chain corresponds to 364 to 372 (LRIAYETEN).

This sequence belongs to the SEDS family. FtsW subfamily.

The protein localises to the cell inner membrane. The enzyme catalyses [GlcNAc-(1-&gt;4)-Mur2Ac(oyl-L-Ala-gamma-D-Glu-L-Lys-D-Ala-D-Ala)](n)-di-trans,octa-cis-undecaprenyl diphosphate + beta-D-GlcNAc-(1-&gt;4)-Mur2Ac(oyl-L-Ala-gamma-D-Glu-L-Lys-D-Ala-D-Ala)-di-trans,octa-cis-undecaprenyl diphosphate = [GlcNAc-(1-&gt;4)-Mur2Ac(oyl-L-Ala-gamma-D-Glu-L-Lys-D-Ala-D-Ala)](n+1)-di-trans,octa-cis-undecaprenyl diphosphate + di-trans,octa-cis-undecaprenyl diphosphate + H(+). It participates in cell wall biogenesis; peptidoglycan biosynthesis. Peptidoglycan polymerase that is essential for cell division. The sequence is that of Probable peptidoglycan glycosyltransferase FtsW from Coxiella burnetii (strain RSA 493 / Nine Mile phase I).